Here is a 472-residue protein sequence, read N- to C-terminus: Siroheme synthase 2 (472 aa).

Positions 1 to 204 (MDYFPIFCQL…EDQVQVEQHV (204 aa)) are precorrin-2 dehydrogenase /sirohydrochlorin ferrochelatase. NAD(+)-binding positions include 22–23 (EV) and 43–44 (CE). Position 128 is a phosphoserine (S128). A uroporphyrinogen-III C-methyltransferase region spans residues 216–472 (GEVVLVGAGP…GMKEQVERVG (257 aa)). P225 serves as a coordination point for S-adenosyl-L-methionine. The active-site Proton acceptor is D248. The Proton donor role is filled by K270. S-adenosyl-L-methionine is bound by residues 301 to 303 (GGD), I306, 331 to 332 (TA), M382, and G411.

In the N-terminal section; belongs to the precorrin-2 dehydrogenase / sirohydrochlorin ferrochelatase family. The protein in the C-terminal section; belongs to the precorrin methyltransferase family.

It catalyses the reaction uroporphyrinogen III + 2 S-adenosyl-L-methionine = precorrin-2 + 2 S-adenosyl-L-homocysteine + H(+). The catalysed reaction is precorrin-2 + NAD(+) = sirohydrochlorin + NADH + 2 H(+). The enzyme catalyses siroheme + 2 H(+) = sirohydrochlorin + Fe(2+). Its pathway is cofactor biosynthesis; adenosylcobalamin biosynthesis; precorrin-2 from uroporphyrinogen III: step 1/1. It functions in the pathway cofactor biosynthesis; adenosylcobalamin biosynthesis; sirohydrochlorin from precorrin-2: step 1/1. The protein operates within porphyrin-containing compound metabolism; siroheme biosynthesis; precorrin-2 from uroporphyrinogen III: step 1/1. It participates in porphyrin-containing compound metabolism; siroheme biosynthesis; siroheme from sirohydrochlorin: step 1/1. Its pathway is porphyrin-containing compound metabolism; siroheme biosynthesis; sirohydrochlorin from precorrin-2: step 1/1. In terms of biological role, multifunctional enzyme that catalyzes the SAM-dependent methylations of uroporphyrinogen III at position C-2 and C-7 to form precorrin-2 via precorrin-1. Then it catalyzes the NAD-dependent ring dehydrogenation of precorrin-2 to yield sirohydrochlorin. Finally, it catalyzes the ferrochelation of sirohydrochlorin to yield siroheme. This is Siroheme synthase 2 from Yersinia enterocolitica serotype O:8 / biotype 1B (strain NCTC 13174 / 8081).